We begin with the raw amino-acid sequence, 93 residues long: Small ribosomal subunit protein uS19 (93 aa).

It belongs to the universal ribosomal protein uS19 family.

In terms of biological role, protein S19 forms a complex with S13 that binds strongly to the 16S ribosomal RNA. This chain is Small ribosomal subunit protein uS19, found in Alkaliphilus metalliredigens (strain QYMF).